We begin with the raw amino-acid sequence, 177 residues long: Nucleoside triphosphate/diphosphate phosphatase (177 aa).

The active-site Proton donor is the Arg23. Mg(2+) contacts are provided by Asn87, Asp103, Asp105, Asp107, Asp120, and Glu123.

This sequence belongs to the Ntdp family. Mg(2+) serves as cofactor.

It catalyses the reaction a ribonucleoside 5'-triphosphate + H2O = a ribonucleoside 5'-diphosphate + phosphate + H(+). It carries out the reaction a ribonucleoside 5'-diphosphate + H2O = a ribonucleoside 5'-phosphate + phosphate + H(+). Its function is as follows. Has nucleoside phosphatase activity towards nucleoside triphosphates and nucleoside diphosphates. The protein is Nucleoside triphosphate/diphosphate phosphatase of Streptococcus agalactiae serotype Ia (strain ATCC 27591 / A909 / CDC SS700).